Consider the following 725-residue polypeptide: Eukaryotic elongation factor 2 kinase (725 aa).

The span at 1–12 (MADEDLIFRLEG) shows a compositional bias: basic and acidic residues. The interval 1 to 38 (MADEDLIFRLEGVDGGQSPRAGHDGDSDGDSDDEEGYF) is disordered. Ala2 carries the post-translational modification N-acetylalanine. Residues Ser18 and Ser27 each carry the phosphoserine modification. The span at 27–36 (SDGDSDDEEG) shows a compositional bias: acidic residues. 2 positions are modified to phosphoserine; by autocatalysis: Ser61 and Ser66. Ser70, Ser71, Ser72, and Ser74 each carry phosphoserine. A Phosphoserine; by autocatalysis and TRPM7 modification is found at Ser78. The tract at residues 81–94 (FKEAWKHAIQKAKH) is calmodulin-binding. The Alpha-type protein kinase domain maps to 116-326 (RYNAVTGEWL…ICESMGLAPF (211 aa)). Ser243 is modified (phosphoserine). Residue 296-302 (GDGNLGV) participates in ATP binding. Thr348 and Thr353 each carry phosphothreonine; by autocatalysis. Disordered stretches follow at residues 352 to 405 (GTEE…PHSQ) and 423 to 477 (SRDH…SLGS). Ser359 is subject to Phosphoserine; by MAPK13 and CDK1. Residues 363–377 (RTLSGSRPPLLRPLS) are compositionally biased toward low complexity. Phosphoserine; by autocatalysis, RPS6KA1 and RPS6KB1 is present on Ser366. Residues 386–404 (SDVTFDSLPSSPSSATPHS) show a composition bias toward polar residues. At Ser392 the chain carries Phosphoserine. Residue Ser398 is modified to Phosphoserine; by AMPK. Composition is skewed to basic and acidic residues over residues 423 to 436 (SRDH…RESE) and 445 to 469 (SEKR…RKYE). A Phosphoserine modification is found at Ser435. The residue at position 445 (Ser445) is a Phosphoserine; by autocatalysis. At Ser470 the chain carries Phosphoserine. A Phosphoserine; by autocatalysis modification is found at Ser474. Phosphoserine is present on Ser477. Ser491 carries the phosphoserine; by autocatalysis modification. Ser500 carries the phosphoserine; by PKA modification.

The protein belongs to the protein kinase superfamily. Alpha-type protein kinase family. Monomer or homodimer. Interacts with Calmodulin/CALM1; this interaction is strictly required for phosphorylation activity. In terms of processing, autophosphorylated at multiple residues, Thr-348 being the major site. Phosphorylated by AMP-activated protein kinase AMPK at Ser-398 leading to EEF2K activation and protein synthesis inhibition. Phosphorylated by TRPM7 at Ser-78 resulting in improved protein stability, higher EE2F phosphorylated and subsequently reduced rate of protein synthesis. Phosphorylation by other kinases such as CDK1 and MAPK13 at Ser-359 or RPS6KA1 and RPS6KB1 at Ser-366 instead decrease EEF2K activity and promote protein synthesis.

It carries out the reaction [translation elongation factor 2] + ATP = [translation elongation factor 2]-phosphate + ADP + H(+). Its activity is regulated as follows. Undergoes calcium/calmodulin-dependent intramolecular autophosphorylation, and this results in it becoming partially calcium/calmodulin-independent. Its function is as follows. Threonine kinase that regulates protein synthesis by controlling the rate of peptide chain elongation. Upon activation by a variety of upstream kinases including AMPK or TRPM7, phosphorylates the elongation factor EEF2 at a single site, renders it unable to bind ribosomes and thus inactive. In turn, the rate of protein synthesis is reduced. The sequence is that of Eukaryotic elongation factor 2 kinase (EEF2K) from Homo sapiens (Human).